Reading from the N-terminus, the 584-residue chain is MSFVIVARDALAAAAADLAQIGSAVNAGNLAAANPTTAVAAAAADEVSAALAALFGAHAREYQAAAAQAAAYHEQFVHRLSAAATSYAVTEVTIATSLRGALGSAPASVSDGFQAFVYGPIHATGQQWINSPVGEALAPIVNAPTNVLLGRDLIGNGVTGTAAAPNGGPGGLLFGDGGAGYTGGNGGSAGLIGNGGTGGAGFAGGVGGMGGTGGWLMGNGGMGGAGGVGGNGGAGGQALLFGNGGLGGAGGAGGVDGAIGRGGWFIGTGGMATIGGGGNGQSIVIDFVRHGQTPGNAAMLIDTAVPGPGLTALGQQQAQAIANALAAKGPYAGIFDSQLIRTQQTAAPLANLLGMAPQVLPGLNEIHAGIFEDLPQISPAGLLYLVGPIAWTLGFPIVPMLAPGSTDVNGIVFNRAFTGAVQTIYDASLANPVVAADGNITSVAYSSAFTIGVGTMMNVDNPHPLLLLTHPVPNTGAVVVQGNPEGGWTLVSWDGIPVGPASLPTALFVDVRELITAPQYAAYDIWESLFTGDPAAVINAVRDGADEVGAAVVQFPHAVADDVIDATGHPYLSGLPIGLPSLIP.

Positions 1 to 92 (MSFVIVARDA…AATSYAVTEV (92 aa)) constitute a PE domain. The active-site Tele-phosphohistidine intermediate is His290. Catalysis depends on Glu365, which acts as the Proton donor/acceptor. The tract at residues 384-584 (YLVGPIAWTL…LPIGLPSLIP (201 aa)) is phosphoglycerate mutase.

In the N-terminal section; belongs to the mycobacterial PE family. PGRS subfamily. This sequence in the C-terminal section; belongs to the phosphoglycerate mutase family. Interacts with human TLR2. Mg(2+) is required as a cofactor.

Its subcellular location is the secreted. It is found in the cell wall. The protein resides in the cell surface. It carries out the reaction (2R)-2-phosphoglycerate = (2R)-3-phosphoglycerate. Functionally, induces maturation and activation of human dendritic cells (DCs), via TLR2-dependent activation of ERK1/2, p38 MAPK, and NF-kappa-B signaling pathways, and enhances the ability of DCs to stimulate CD4(+) T cells. By activating DCs, could potentially contribute to the initiation of innate immune responses during tuberculosis infection and hence regulate the clinical course of tuberculosis. Involved in resistance to oxidative stress, via TLR2-dependent activation of the PI3K-ERK1/2-NF-kappa-B signaling pathway and expression of COX-2 and Bcl2. Also abolishes H(2)O(2)-triggered activation of p38 MAPK. The polypeptide is PE-PGRS family protein PE_PGRS11 (Mycobacterium tuberculosis (strain ATCC 25618 / H37Rv)).